The following is a 417-amino-acid chain: NADH-quinone oxidoreductase subunit D (417 aa).

It belongs to the complex I 49 kDa subunit family. NDH-1 is composed of 14 different subunits. Subunits NuoB, C, D, E, F, and G constitute the peripheral sector of the complex.

The protein localises to the cell inner membrane. The catalysed reaction is a quinone + NADH + 5 H(+)(in) = a quinol + NAD(+) + 4 H(+)(out). Functionally, NDH-1 shuttles electrons from NADH, via FMN and iron-sulfur (Fe-S) centers, to quinones in the respiratory chain. The immediate electron acceptor for the enzyme in this species is believed to be ubiquinone. Couples the redox reaction to proton translocation (for every two electrons transferred, four hydrogen ions are translocated across the cytoplasmic membrane), and thus conserves the redox energy in a proton gradient. The polypeptide is NADH-quinone oxidoreductase subunit D (Acidithiobacillus ferrooxidans (strain ATCC 53993 / BNL-5-31) (Leptospirillum ferrooxidans (ATCC 53993))).